We begin with the raw amino-acid sequence, 291 residues long: Homoserine kinase (291 aa).

80–90 (RPASGLGSSAA) contributes to the ATP binding site.

The protein belongs to the GHMP kinase family. Homoserine kinase subfamily.

The protein resides in the cytoplasm. It carries out the reaction L-homoserine + ATP = O-phospho-L-homoserine + ADP + H(+). The protein operates within amino-acid biosynthesis; L-threonine biosynthesis; L-threonine from L-aspartate: step 4/5. In terms of biological role, catalyzes the ATP-dependent phosphorylation of L-homoserine to L-homoserine phosphate. This chain is Homoserine kinase, found in Haloarcula marismortui (strain ATCC 43049 / DSM 3752 / JCM 8966 / VKM B-1809) (Halobacterium marismortui).